Consider the following 103-residue polypeptide: Sec-independent protein translocase protein TatA (103 aa).

Residues 1-21 form a helical membrane-spanning segment; the sequence is MGNIFSPTHLIIILLLILLLF. The tract at residues 48-103 is disordered; the sequence is EESIEDKVEMADTSQVINEESQQSQPLSVKRAAIRRKASSDSKGGKASIAKKQRVK. The span at 59–74 shows a compositional bias: polar residues; that stretch reads DTSQVINEESQQSQPL.

The protein belongs to the TatA/E family. In terms of assembly, the Tat system comprises two distinct complexes: a TatABC complex, containing multiple copies of TatA, TatB and TatC subunits, and a separate TatA complex, containing only TatA subunits. Substrates initially bind to the TatABC complex, which probably triggers association of the separate TatA complex to form the active translocon.

The protein resides in the cell inner membrane. Part of the twin-arginine translocation (Tat) system that transports large folded proteins containing a characteristic twin-arginine motif in their signal peptide across membranes. TatA could form the protein-conducting channel of the Tat system. This is Sec-independent protein translocase protein TatA from Bartonella tribocorum (strain CIP 105476 / IBS 506).